Reading from the N-terminus, the 273-residue chain is Eukaryotic translation initiation factor 3 subunit J (273 aa).

The segment at 1 to 158 is disordered; the sequence is MPTKKWEDEE…DPSDPSKTVE (158 aa). Residues 34–54 show a composition bias toward acidic residues; it reads DEEANDSDVLDSWDAAEDSEV. Positions 50–97 form a coiled coil; it reads EDSEVEREKAKKAAEAKAKAEAEAKANKKTKAARINEHKQRRKEAEES. Basic and acidic residues predominate over residues 55-75; it reads EREKAKKAAEAKAKAEAEAKA. Positions 95–104 are enriched in acidic residues; that stretch reads EESDESDDET. Over residues 105-126 the composition is skewed to basic and acidic residues; the sequence is ESQRRERLRRTEKEADLAHAED.

The protein belongs to the eIF-3 subunit J family. In terms of assembly, component of the eukaryotic translation initiation factor 3 (eIF-3) complex.

It is found in the cytoplasm. Component of the eukaryotic translation initiation factor 3 (eIF-3) complex, which is involved in protein synthesis of a specialized repertoire of mRNAs and, together with other initiation factors, stimulates binding of mRNA and methionyl-tRNAi to the 40S ribosome. The eIF-3 complex specifically targets and initiates translation of a subset of mRNAs involved in cell proliferation. The chain is Eukaryotic translation initiation factor 3 subunit J from Pyricularia oryzae (strain 70-15 / ATCC MYA-4617 / FGSC 8958) (Rice blast fungus).